We begin with the raw amino-acid sequence, 772 residues long: Uracil catabolism protein 2 (772 aa).

The interval 1-70 (MDINSNASVS…KKPRKKRKTF (70 aa)) is disordered. Positions 39-51 (HPEDSARAKERSE) are enriched in basic and acidic residues. A compositionally biased stretch (basic residues) spans 59-69 (GNKKPRKKRKT). A DNA-binding region (zn(2)-C6 fungal-type) is located at residues 72 to 101 (CDTCRRVKTRCDFEPFIGKCYRCNVLQLDC).

It belongs to the URC2 family.

The protein localises to the cytoplasm. Its subcellular location is the nucleus. In terms of biological role, probable transcriptional activator involved in uracil catabolism. This Saccharomyces cerevisiae (strain ATCC 204508 / S288c) (Baker's yeast) protein is Uracil catabolism protein 2 (URC2).